The primary structure comprises 842 residues: Alanine--tRNA ligase (842 aa).

The Zn(2+) site is built by His549, His553, Cys650, and His654.

The protein belongs to the class-II aminoacyl-tRNA synthetase family. It depends on Zn(2+) as a cofactor.

The protein resides in the cytoplasm. The catalysed reaction is tRNA(Ala) + L-alanine + ATP = L-alanyl-tRNA(Ala) + AMP + diphosphate. Its function is as follows. Catalyzes the attachment of alanine to tRNA(Ala) in a two-step reaction: alanine is first activated by ATP to form Ala-AMP and then transferred to the acceptor end of tRNA(Ala). Also edits incorrectly charged Ser-tRNA(Ala) and Gly-tRNA(Ala) via its editing domain. The chain is Alanine--tRNA ligase from Campylobacter jejuni subsp. jejuni serotype O:6 (strain 81116 / NCTC 11828).